Reading from the N-terminus, the 397-residue chain is Cathepsin E-A (397 aa).

Residues 1–16 form the signal peptide; it reads MRQILVLLLFATLVYG. The propeptide at 17–52 is activation peptide; it reads LIRVPLKRQKSIRKTLKEKGKLSHIWTQQGIDMVQY. One can recognise a Peptidase A1 domain in the interval 74-385; it reads YFGEISVGTP…DRGNNRVGLA (312 aa). A glycan (N-linked (GlcNAc...) asparagine) is linked at Asn-86. Asp-92 is an active-site residue. A disulfide bond links Cys-105 and Cys-110. Asn-130 carries an N-linked (GlcNAc...) asparagine glycan. Cys-268 and Cys-272 are disulfide-bonded. Residue Asp-277 is part of the active site. A disulfide bond links Cys-310 and Cys-344.

Belongs to the peptidase A1 family. Homodimer; disulfide-linked. Post-translationally, glycosylated. Contains high mannose-type oligosaccharide. Expressed predominantly in the larval foregut and the anterior and posterior adult stomach.

The protein resides in the endosome. The enzyme catalyses Similar to cathepsin D, but slightly broader specificity.. May have a role in immune function. Probably involved in the processing of antigenic peptides during MHC class II-mediated antigen presentation. This chain is Cathepsin E-A (ctse-a), found in Xenopus laevis (African clawed frog).